A 257-amino-acid polypeptide reads, in one-letter code: MLLVVDVGNTNTVFGIFENGKNVPLFHKRTVTRKDRTSDELGLFFRGFLREFKIENEAITGGIYSSVVPTLNPILERMFQDWFKIEAIRVHYQMKLPFSISYPRPYEIGADRLVNAAACVIDSPGKFIIIDLGTATTFCVVSEKPEYLGGVIAPGLKVSMDALTRNTSQLPPIVFQSPEKILGDSTIESIQAGFFFGWIGLLEGIIREIKKDKGQDYRVIGTGGLVTVIDAAHPGIFDKIDPLLTLRGLQILHQMNS.

Residue 6-13 participates in ATP binding; sequence DVGNTNTV. Substrate contacts are provided by residues Tyr102 and 109–112; that span reads GADR. The active-site Proton acceptor is the Asp111. Asp131 lines the K(+) pocket. ATP is bound at residue Thr134. Thr186 serves as a coordination point for substrate.

This sequence belongs to the type III pantothenate kinase family. As to quaternary structure, homodimer. NH4(+) is required as a cofactor. It depends on K(+) as a cofactor.

The protein localises to the cytoplasm. It catalyses the reaction (R)-pantothenate + ATP = (R)-4'-phosphopantothenate + ADP + H(+). It functions in the pathway cofactor biosynthesis; coenzyme A biosynthesis; CoA from (R)-pantothenate: step 1/5. Catalyzes the phosphorylation of pantothenate (Pan), the first step in CoA biosynthesis. In Leptospira borgpetersenii serovar Hardjo-bovis (strain JB197), this protein is Type III pantothenate kinase.